The following is a 345-amino-acid chain: Phosphate acyltransferase (345 aa).

This sequence belongs to the PlsX family. Homodimer. Probably interacts with PlsY.

It is found in the cytoplasm. It catalyses the reaction a fatty acyl-[ACP] + phosphate = an acyl phosphate + holo-[ACP]. The protein operates within lipid metabolism; phospholipid metabolism. Functionally, catalyzes the reversible formation of acyl-phosphate (acyl-PO(4)) from acyl-[acyl-carrier-protein] (acyl-ACP). This enzyme utilizes acyl-ACP as fatty acyl donor, but not acyl-CoA. The protein is Phosphate acyltransferase of Wolbachia pipientis wMel.